Here is a 172-residue protein sequence, read N- to C-terminus: T-cell receptor gamma chain C region C7.5 (172 aa).

The interval D1 to T140 is c region. Residues Y141 to L160 traverse the membrane as a helical segment. The Cytoplasmic portion of the chain corresponds to R161 to S172.

The protein localises to the membrane. This Mus musculus (Mouse) protein is T-cell receptor gamma chain C region C7.5.